A 456-amino-acid polypeptide reads, in one-letter code: Transcription factor bHLH62 (456 aa).

A compositionally biased stretch (polar residues) spans Arg159–Pro185. The interval Arg159 to Asp254 is disordered. A compositionally biased stretch (basic and acidic residues) spans Lys223–Asp254. One can recognise a bHLH domain in the interval Gln264–Leu314.

In terms of assembly, homodimer. Expressed constitutively in roots, leaves, stems, and flowers.

It localises to the nucleus. This is Transcription factor bHLH62 (BHLH62) from Arabidopsis thaliana (Mouse-ear cress).